The sequence spans 1188 residues: Probable RNA helicase armi (1188 aa).

Residue 723 to 730 (GPPGSGKT) participates in ATP binding. The DEAG box signature appears at 862-865 (DEAG).

The protein belongs to the DNA2/NAM7 helicase family. SDE3 subfamily. Forms a complex with piwi and fs(1)Yb; this interaction is required for proper piRNA loading and nuclear localization of piwi. The interaction of piwi and fs(1)Yb is likely to occur via armi. Abundant in oocytes and syncytial blastoderm. Expressed at low level throughout development, including somatic tissues. First apparent early in oogenesis, in the cytoplasm of stem cells and mitotically dividing cystoblasts. In regions 2a and 2b of the germarium, it is most concentrated in the center of the germline cysts, where the pro-oocyte is located. In stage 1 and early stage 2 egg chambers, it accumulates at the anterior of the oocyte, near the ring canals. It also extends through the ring canals forming a branched structure that links the early oocyte with adjacent nurse cells. In stage 3 cysts, it accumulates at the posterior cortex and localizes to extensions that pass through the oocyte into the nurse cells. Through stages 4 to 7, it continues to be somewhat enriched at the posterior cortex of the oocyte, but at significantly lower level. In stage 9 to 10 egg chambers, it is found throughout the cytoplasm of the oocyte and nurse cells, with slight enrichment at the oocyte cortex.

The protein localises to the cytoplasm. It carries out the reaction ATP + H2O = ADP + phosphate + H(+). Probable RNA helicase required for axial polarization of the oocyte during early and mid oogenesis. Plays a central role in RNA interference (RNAi) process, a process that mediates mRNA destruction of translational repression. Required for the assembly of the RISC complex, a complex required for target RNA destruction or repression. May be required in the RISC assembly to unwind miRNAs, in the production of single-stranded miRNA from the double-stranded miRNA, a key step in RISC formation. Required both for the translational control of oskar (osk) mRNA and cytoskeletal polarization in the oocyte. Required for somatic primary piRNA biogenesis. Involved in repression of long interspersed nuclear elements (LINEs) including HeT-A, I-element and TART LINEs. The polypeptide is Probable RNA helicase armi (Drosophila melanogaster (Fruit fly)).